Consider the following 65-residue polypeptide: Small ribosomal subunit protein bS21A (65 aa).

This sequence belongs to the bacterial ribosomal protein bS21 family.

This chain is Small ribosomal subunit protein bS21A, found in Francisella tularensis subsp. tularensis (strain FSC 198).